The following is a 233-amino-acid chain: 3-dehydroquinate dehydratase (233 aa).

Residues 34-36 and arginine 64 each bind 3-dehydroquinate; that span reads ELR. Histidine 118 (proton donor/acceptor) is an active-site residue. Lysine 145 acts as the Schiff-base intermediate with substrate in catalysis. Arginine 185, serine 205, and glutamine 209 together coordinate 3-dehydroquinate.

This sequence belongs to the type-I 3-dehydroquinase family. Homodimer.

The catalysed reaction is 3-dehydroquinate = 3-dehydroshikimate + H2O. The protein operates within metabolic intermediate biosynthesis; chorismate biosynthesis; chorismate from D-erythrose 4-phosphate and phosphoenolpyruvate: step 3/7. Involved in the third step of the chorismate pathway, which leads to the biosynthesis of aromatic amino acids. Catalyzes the cis-dehydration of 3-dehydroquinate (DHQ) and introduces the first double bond of the aromatic ring to yield 3-dehydroshikimate. This chain is 3-dehydroquinate dehydratase, found in Coxiella burnetii (strain CbuG_Q212) (Coxiella burnetii (strain Q212)).